Reading from the N-terminus, the 290-residue chain is MDIEAYFERIGYKNSRNKLDLETLTDILEHQIRAVPFENLNMHCGEAMELGLETIFDHIVRRNRGGWCLQVNQLLYWALTTIGFQTTMLGGYVYIPAANKYSTGMIHLLLQVTIDGRNYIADAGFGSSSQMWQPLELISGKDQPQMPSIFRLTEQKGIWYLDQIRREQYIPNTEFLNSDLLPKTTHQKVYSFTLEPRKIEDFESMNTYLQTSPTSAFTTTSFCSLQTPEGVHCLVGFTLTYRIFNYKDNTDLIEFKTLIEEEVEEVLKNIFKISLGRKLVPKPGNGSFTI.

Catalysis depends on C68, which acts as the Acyl-thioester intermediate. The CoA site is built by T103 and G104. 106-107 is a substrate binding site; that stretch reads IH. Active-site residues include H107 and D122. CoA is bound by residues Y208, T214, and S287.

The protein belongs to the arylamine N-acetyltransferase family.

It localises to the cytoplasm. The enzyme catalyses an arylamine + acetyl-CoA = an N-acetylarylamine + CoA. The catalysed reaction is an N-hydroxyarylamine + acetyl-CoA = an N-acetoxyarylamine + CoA. Its function is as follows. Catalyzes the N- or O-acetylation of various arylamine and heterocyclic amine substrates, and participates in the detoxification of a plethora of hydrazine and arylamine drugs. The protein is Arylamine N-acetyltransferase 2 (NAT2) of Macaca mulatta (Rhesus macaque).